We begin with the raw amino-acid sequence, 90 residues long: Small ribosomal subunit protein uS15c (90 aa).

This sequence belongs to the universal ribosomal protein uS15 family. As to quaternary structure, part of the 30S ribosomal subunit.

It localises to the plastid. The protein resides in the chloroplast. The polypeptide is Small ribosomal subunit protein uS15c (rps15-A) (Zea mays (Maize)).